Here is a 195-residue protein sequence, read N- to C-terminus: dCTP deaminase (195 aa).

DCTP is bound by residues 109–114, Asp-127, 135–137, Tyr-170, Lys-177, and Gln-181; these read RSSLAR and TLE. Glu-137 acts as the Proton donor/acceptor in catalysis.

The protein belongs to the dCTP deaminase family. As to quaternary structure, homotrimer.

It carries out the reaction dCTP + H2O + H(+) = dUTP + NH4(+). Its pathway is pyrimidine metabolism; dUMP biosynthesis; dUMP from dCTP (dUTP route): step 1/2. Catalyzes the deamination of dCTP to dUTP. This chain is dCTP deaminase, found in Rhodospirillum rubrum (strain ATCC 11170 / ATH 1.1.1 / DSM 467 / LMG 4362 / NCIMB 8255 / S1).